The chain runs to 80 residues: Exodeoxyribonuclease 7 small subunit (80 aa).

This sequence belongs to the XseB family. In terms of assembly, heterooligomer composed of large and small subunits.

It is found in the cytoplasm. The enzyme catalyses Exonucleolytic cleavage in either 5'- to 3'- or 3'- to 5'-direction to yield nucleoside 5'-phosphates.. Its function is as follows. Bidirectionally degrades single-stranded DNA into large acid-insoluble oligonucleotides, which are then degraded further into small acid-soluble oligonucleotides. The sequence is that of Exodeoxyribonuclease 7 small subunit from Marinomonas sp. (strain MWYL1).